Here is a 456-residue protein sequence, read N- to C-terminus: Methylenetetrahydrofolate--tRNA-(uracil-5-)-methyltransferase TrmFO (456 aa).

12 to 17 (GGGLAG) provides a ligand contact to FAD.

It belongs to the MnmG family. TrmFO subfamily. FAD is required as a cofactor.

It is found in the cytoplasm. The enzyme catalyses uridine(54) in tRNA + (6R)-5,10-methylene-5,6,7,8-tetrahydrofolate + NADH + H(+) = 5-methyluridine(54) in tRNA + (6S)-5,6,7,8-tetrahydrofolate + NAD(+). It carries out the reaction uridine(54) in tRNA + (6R)-5,10-methylene-5,6,7,8-tetrahydrofolate + NADPH + H(+) = 5-methyluridine(54) in tRNA + (6S)-5,6,7,8-tetrahydrofolate + NADP(+). Functionally, catalyzes the folate-dependent formation of 5-methyl-uridine at position 54 (M-5-U54) in all tRNAs. The protein is Methylenetetrahydrofolate--tRNA-(uracil-5-)-methyltransferase TrmFO of Picosynechococcus sp. (strain ATCC 27264 / PCC 7002 / PR-6) (Agmenellum quadruplicatum).